Consider the following 896-residue polypeptide: Translation initiation factor IF-2 (896 aa).

Disordered regions lie at residues 53–81 (HGGE…SASK) and 117–301 (AEEA…ESMD). Residues 60 to 79 (TKMTLQRKSVSTLSVGSGSA) are compositionally biased toward polar residues. A compositionally biased stretch (basic and acidic residues) spans 117 to 227 (AEEAASKAKA…ESEKTGDHHV (111 aa)). A compositionally biased stretch (low complexity) spans 254–266 (ATPAPAAAPANTG). Residues 273–282 (GKDNRRDSRN) are compositionally biased toward basic and acidic residues. Positions 283–294 (ARGGRNARNNRS) are enriched in low complexity. In terms of domain architecture, tr-type G spans 394–563 (SRAPVVTIMG…LLEAEVLELK (170 aa)). The G1 stretch occupies residues 403 to 410 (GHVDHGKT). 403 to 410 (GHVDHGKT) lines the GTP pocket. The segment at 428-432 (GITQH) is G2. Residues 449–452 (DTPG) form a G3 region. GTP is bound by residues 449–453 (DTPGH) and 503–506 (NKID). Residues 503 to 506 (NKID) are G4. The tract at residues 539–541 (SAK) is G5.

Belongs to the TRAFAC class translation factor GTPase superfamily. Classic translation factor GTPase family. IF-2 subfamily.

The protein resides in the cytoplasm. Its function is as follows. One of the essential components for the initiation of protein synthesis. Protects formylmethionyl-tRNA from spontaneous hydrolysis and promotes its binding to the 30S ribosomal subunits. Also involved in the hydrolysis of GTP during the formation of the 70S ribosomal complex. This is Translation initiation factor IF-2 from Shewanella sediminis (strain HAW-EB3).